The chain runs to 194 residues: Cysteine and glycine-rich protein 2 (194 aa).

The region spanning 10–61 is the LIM zinc-binding 1 domain; it reads CGACGRTVYHAEEVQCDGRSFHRCCFLCMVCRKNLDSTTVAIHDAEVYCKSC. A Nuclear localization signal motif is present at residues 64 to 69; the sequence is KKYGPK. The interval 85–110 is disordered; sequence GERLGIKPESSPSPHRPTTNPNTSKF. Residues 94–110 show a composition bias toward polar residues; the sequence is SSPSPHRPTTNPNTSKF. In terms of domain architecture, LIM zinc-binding 2 spans 120-171; sequence CSRCGDSVYAAEKVIGAGKPWHKNCFRCAKCGKSLESTTLTEKEGEIYCKGC.

It is found in the nucleus. Interacts with zyxin. May be a component of a signal transduction pathway that mediates adhesion-stimulated changes in gene expression. Totally down-regulated in transformed cells. This Coturnix japonica (Japanese quail) protein is Cysteine and glycine-rich protein 2 (CSRP2).